Reading from the N-terminus, the 173-residue chain is MFRPSTSLALRSTLRQLASASNQPIPPGSEINAVKRTVATILPPIRLYRRIIRAHRRLDPDMRAVGDNYVKDEFRRHKNIDNPLQIIGFLSSWKMYLDQLEVQQGQPGGFRGQRLDPQLLEKMSDEQIYQIHELMTATQEAYSDKAQAFPPEKQRELAEKAAADAGLSVKKDE.

The N-terminal 59 residues, 1 to 59 (MFRPSTSLALRSTLRQLASASNQPIPPGSEINAVKRTVATILPPIRLYRRIIRAHRRLD), are a transit peptide targeting the mitochondrion. Positions 149 to 173 (FPPEKQRELAEKAAADAGLSVKKDE) are disordered. The segment covering 152–162 (EKQRELAEKAA) has biased composition (basic and acidic residues).

The protein belongs to the complex I LYR family. SDHAF3 subfamily. In terms of assembly, interacts with the iron-sulfur protein subunit within the SDH catalytic dimer.

The protein localises to the mitochondrion matrix. In terms of biological role, plays an essential role in the assembly of succinate dehydrogenase (SDH), an enzyme complex (also referred to as respiratory complex II) that is a component of both the tricarboxylic acid (TCA) cycle and the mitochondrial electron transport chain, and which couples the oxidation of succinate to fumarate with the reduction of ubiquinone (coenzyme Q) to ubiquinol. Promotes maturation of the iron-sulfur protein subunit of the SDH catalytic dimer, protecting it from the deleterious effects of oxidants. May act together with SDHAF1. The sequence is that of Succinate dehydrogenase assembly factor 3, mitochondrial from Mycosarcoma maydis (Corn smut fungus).